Consider the following 752-residue polypeptide: MTISPPEREEKKARVIVDKDPVPTSFEKWAQPGHFDRTLARGPKTTTWIWNLHALAHDFDTHTSDLEDISRKIFAAHFGHLAVVTIWLSGMIFHGAKFSNYEAWLSDPLNVRPSAQVVWPIVGQDILNGDVGGGFHGIQITSGLFQVWRGWGITNSFQLYCTAIGGLVLAGLFLFAGWFHYHKRAPKLEWFQNVESMLNHHLQVLLGCGSLGWAGHLIHVSAPINKLMDAGVAVKDIPLPHEFILNKSLLIDLFPGFAAGLTPFFTLNWGQYADFLTFKGGLNPVTGGLWMTDIAHHHLAIAVVFIIAGHQYRTNWGIGHSIKEILENHKGPFTGEGHKGLYENLTTSWHAQLATNLAFLGSLTIIIAHHMYAMPPYPYLATDYATQLCIFTHHIWIGGFLIVGGAAHAAIFMVRDYDPVVNQNNVLDRVIRHRDAIISHLNWVCIFLGFHSFGLYIHNDTMRALGRPQDMFSDTAIQLQPVFAQWVQNLHTLAPGGTAPNALEPVSYAFGGGVLAVGGKVAMMPIALGTADFLIHHIHAFTIHVTVLILLKGVLFARSSRLIPDKANLGFRFPCDGPGRGGTCQVSGWDHVFLGLFWMYNSLSIVIFHFSWKMQSDVWGTVDAAGNVSHITGGNFAQSAITINGWLRDFLWAQASQVINSYGSALSAYGLMFLGAHFVWAFSLMFLFSGRGYWQELIESIVWAHNKLKVAPAIQPRALSITQGRAVGVAHYLLGGIATTWAFFHAHILSVG.

The next 8 membrane-spanning stretches (helical) occupy residues 73–96 (IFAA…FHGA), 159–182 (LYCT…FHYH), 198–222 (LNHH…HVSA), 294–312 (IAHH…GHQY), 349–372 (WHAQ…HHMY), 388–414 (LCIF…IFMV), 436–458 (AIIS…LYIH), and 533–551 (FLIH…LILL). Cysteine 575 and cysteine 584 together coordinate [4Fe-4S] cluster. 2 helical membrane-spanning segments follow: residues 591–612 (HVFL…HFSW) and 666–688 (LSAY…MFLF). Histidine 677 contacts chlorophyll a'. Residues methionine 685 and tyrosine 693 each contribute to the chlorophyll a site. Tryptophan 694 contacts phylloquinone. Residues 726-746 (AVGVAHYLLGGIATTWAFFHA) traverse the membrane as a helical segment.

It belongs to the PsaA/PsaB family. The PsaA/B heterodimer binds the P700 chlorophyll special pair and subsequent electron acceptors. PSI consists of a core antenna complex that captures photons, and an electron transfer chain that converts photonic excitation into a charge separation. The cyanobacterial PSI reaction center is composed of one copy each of PsaA,B,C,D,E,F,I,J,K,L,M and X, and forms trimeric complexes. The cofactor is PSI electron transfer chain: 5 chlorophyll a, 1 chlorophyll a', 2 phylloquinones and 3 4Fe-4S clusters. PSI core antenna: 90 chlorophyll a, 22 carotenoids, 3 phospholipids and 1 galactolipid. P700 is a chlorophyll a/chlorophyll a' dimer, A0 is one or more chlorophyll a, A1 is one or both phylloquinones and FX is a shared 4Fe-4S iron-sulfur center..

The protein resides in the cellular thylakoid membrane. It carries out the reaction reduced [plastocyanin] + hnu + oxidized [2Fe-2S]-[ferredoxin] = oxidized [plastocyanin] + reduced [2Fe-2S]-[ferredoxin]. Functionally, psaA and PsaB bind P700, the primary electron donor of photosystem I (PSI), as well as the electron acceptors A0, A1 and FX. PSI is a plastocyanin/cytochrome c6-ferredoxin oxidoreductase, converting photonic excitation into a charge separation, which transfers an electron from the donor P700 chlorophyll pair to the spectroscopically characterized acceptors A0, A1, FX, FA and FB in turn. Oxidized P700 is reduced on the lumenal side of the thylakoid membrane by plastocyanin or cytochrome c6. This is Photosystem I P700 chlorophyll a apoprotein A1 from Nostoc sp. (strain PCC 7120 / SAG 25.82 / UTEX 2576).